We begin with the raw amino-acid sequence, 192 residues long: Large ribosomal subunit protein uL6 (192 aa).

This sequence belongs to the universal ribosomal protein uL6 family. As to quaternary structure, part of the 50S ribosomal subunit.

Functionally, this protein binds to the 23S rRNA, and is important in its secondary structure. It is located near the subunit interface in the base of the L7/L12 stalk, and near the tRNA binding site of the peptidyltransferase center. In Nanoarchaeum equitans (strain Kin4-M), this protein is Large ribosomal subunit protein uL6.